Reading from the N-terminus, the 108-residue chain is Tetrahydromethanopterin S-methyltransferase subunit B (108 aa).

The helical transmembrane segment at 79 to 99 (GMFFGFWVTMAILVLVTILAV) threads the bilayer.

Belongs to the MtrB family. In terms of assembly, the complex is composed of 8 subunits; MtrA, MtrB, MtrC, MtrD, MtrE, MtrF, MtrG and MtrH.

Its subcellular location is the cell membrane. It carries out the reaction 5-methyl-5,6,7,8-tetrahydromethanopterin + coenzyme M + 2 Na(+)(in) = 5,6,7,8-tetrahydromethanopterin + methyl-coenzyme M + 2 Na(+)(out). Its pathway is one-carbon metabolism; methanogenesis from CO(2); methyl-coenzyme M from 5,10-methylene-5,6,7,8-tetrahydromethanopterin: step 2/2. Its function is as follows. Part of a complex that catalyzes the formation of methyl-coenzyme M and tetrahydromethanopterin from coenzyme M and methyl-tetrahydromethanopterin. This is an energy-conserving, sodium-ion translocating step. The sequence is that of Tetrahydromethanopterin S-methyltransferase subunit B from Methanococcus maripaludis (strain C7 / ATCC BAA-1331).